The sequence spans 748 residues: E3 ubiquitin-protein ligase SMURF2 (748 aa).

Positions 1–119 (MSNPGGRRNG…TGYQRLDLCK (119 aa)) constitute a C2 domain. A Glycyl lysine isopeptide (Lys-Gly) (interchain with G-Cter in ubiquitin) cross-link involves residue Lys-119. 3 WW domains span residues 157-190 (NDLPDGWEERRTASGRIQYLNHITRTTQWERPTR), 251-284 (PDLPEGYEQRTTQQGQVYFLHTQTGVSTWHDPRV), and 297-330 (GPLPPGWEIRNTATGRVYFVDHNNRTTQFTDPRL). One can recognise an HECT domain in the interval 414–748 (RPKDLWKRLM…IEETCGFAVE (335 aa)). The Glycyl thioester intermediate role is filled by Cys-716.

As to quaternary structure, interacts (via WW domains) with SMAD1. Interacts (via WW domains) with SMAD2 (via PY-motif). Interacts (via WW domains) with SMAD3 (via PY-motif). Interacts with SMAD6. Interacts with SMAD7 (via PY-motif) and TGFBR1; SMAD7 recruits SMURF2 to the TGF-beta receptor and regulates its degradation. Does not interact with SMAD4; SMAD4 lacks a PY-motif. Interacts with AIMP1. Interacts with SNON. Interacts with STAMBP and RNF11. May interact with NDFIP1 and NDFIP2; this interaction induces the E3 ubiquitin-protein ligase activity. Interacts with TTC3. In terms of assembly, (Microbial infection) Interacts (via WW domains) with EBOV and MARV VP40 (via PPXY motif); the interaction facilitates VP40 virus-like particle budding. Auto-ubiquitinated and ubiquitinated in the presence of RNF11 and UBE2D1. Ubiquitinated by the SCF(FBXL15) complex and TTC3, leading to its degradation by the proteasome. 'Lys-48'-linked polyubiquitination mediated by TRAF4 at Lys-119 leads to SMURF2 proteasomal degradation. Widely expressed.

Its subcellular location is the nucleus. The protein resides in the cytoplasm. It localises to the cell membrane. The protein localises to the membrane raft. It catalyses the reaction S-ubiquitinyl-[E2 ubiquitin-conjugating enzyme]-L-cysteine + [acceptor protein]-L-lysine = [E2 ubiquitin-conjugating enzyme]-L-cysteine + N(6)-ubiquitinyl-[acceptor protein]-L-lysine.. The protein operates within protein modification; protein ubiquitination. With respect to regulation, activated by NDFIP1- and NDFIP2-binding. Functionally, E3 ubiquitin-protein ligase which accepts ubiquitin from an E2 ubiquitin-conjugating enzyme in the form of a thioester and then directly transfers the ubiquitin to targeted substrates. Interacts with SMAD7 to trigger SMAD7-mediated transforming growth factor beta/TGF-beta receptor ubiquitin-dependent degradation, thereby down-regulating TGF-beta signaling. In addition, interaction with SMAD7 activates autocatalytic degradation, which is prevented by interaction with AIMP1. Also forms a stable complex with TGF-beta receptor-mediated phosphorylated SMAD1, SMAD2 and SMAD3, and targets SMAD1 and SMAD2 for ubiquitination and proteasome-mediated degradation. SMAD2 may recruit substrates, such as SNON, for ubiquitin-dependent degradation. Negatively regulates TGFB1-induced epithelial-mesenchymal transition and myofibroblast differentiation. (Microbial infection) In case of filoviruses Ebola/EBOV and Marburg/MARV infection, the complex formed by viral matrix protein VP40 and SMURF2 facilitates virus budding. The protein is E3 ubiquitin-protein ligase SMURF2 of Homo sapiens (Human).